We begin with the raw amino-acid sequence, 404 residues long: XK-related protein 8 (404 aa).

Transmembrane regions (helical) follow at residues 14-34, 44-64, 169-189, 209-229, 232-252, 262-282, 293-313, and 324-344; these read FVFS…DVWL, VTWF…VQTF, AVQF…VVDY, LIYF…LALC, VLSG…ALWA, SVAG…FSWF, SAIY…TWWC, and ALAL…FKAL.

The protein belongs to the XK family.

It localises to the cell membrane. It catalyses the reaction a 1,2-diacyl-sn-glycero-3-phospho-L-serine(in) = a 1,2-diacyl-sn-glycero-3-phospho-L-serine(out). Its function is as follows. Phospholipid scramblase that promotes phosphatidylserine exposure on apoptotic cell surface, possibly by mediating phospholipid scrambling. Phosphatidylserine is a specific marker only present at the surface of apoptotic cells and acts as a specific signal for engulfment. This is XK-related protein 8 from Gasterosteus aculeatus (Three-spined stickleback).